We begin with the raw amino-acid sequence, 122 residues long: Large ribosomal subunit protein uL14 (122 aa).

The protein belongs to the universal ribosomal protein uL14 family. Part of the 50S ribosomal subunit. Forms a cluster with proteins L3 and L19. In the 70S ribosome, L14 and L19 interact and together make contacts with the 16S rRNA in bridges B5 and B8.

In terms of biological role, binds to 23S rRNA. Forms part of two intersubunit bridges in the 70S ribosome. The chain is Large ribosomal subunit protein uL14 from Microcystis aeruginosa (strain NIES-843 / IAM M-2473).